The chain runs to 323 residues: PTS system mannose-specific EIIAB component (323 aa).

The PTS EIIA type-4 domain maps to 2–124 (TIAIVIGTHG…VALAVETGRE (123 aa)). His10 acts as the Tele-phosphohistidine intermediate; for EIIA activity in catalysis. His10 bears the Phosphohistidine; by HPr mark. Lys55 is modified (N6-acetyllysine). Residues 137–155 (AAPAPAAAAPKAAPTPAKP) are hinge. Positions 157–320 (GPNDYMVIGL…KLKMMDLISK (164 aa)) constitute a PTS EIIB type-4 domain. His175 acts as the Pros-phosphohistidine intermediate; for EIIB activity in catalysis. A Phosphohistidine; by EIIA modification is found at His175. Lys234 carries the N6-acetyllysine modification.

In terms of assembly, homodimer.

It is found in the cytoplasm. Its subcellular location is the cell inner membrane. It carries out the reaction D-mannose(out) + N(pros)-phospho-L-histidyl-[protein] = D-mannose 6-phosphate(in) + L-histidyl-[protein]. In terms of biological role, the phosphoenolpyruvate-dependent sugar phosphotransferase system (sugar PTS), a major carbohydrate active transport system, catalyzes the phosphorylation of incoming sugar substrates concomitantly with their translocation across the cell membrane. The enzyme II ManXYZ PTS system is involved in mannose transport. The polypeptide is PTS system mannose-specific EIIAB component (manX) (Escherichia coli O157:H7).